The chain runs to 109 residues: Nucleoid-associated protein Caul_4574 (109 aa).

This sequence belongs to the YbaB/EbfC family. In terms of assembly, homodimer.

The protein resides in the cytoplasm. It localises to the nucleoid. In terms of biological role, binds to DNA and alters its conformation. May be involved in regulation of gene expression, nucleoid organization and DNA protection. This is Nucleoid-associated protein Caul_4574 from Caulobacter sp. (strain K31).